The following is a 317-amino-acid chain: tRNA dimethylallyltransferase (317 aa).

14–21 provides a ligand contact to ATP; sequence GPTAVGKT. 16–21 contacts substrate; it reads TAVGKT. The interval 39–42 is interaction with substrate tRNA; the sequence is DSMQ.

This sequence belongs to the IPP transferase family. Monomer. The cofactor is Mg(2+).

It carries out the reaction adenosine(37) in tRNA + dimethylallyl diphosphate = N(6)-dimethylallyladenosine(37) in tRNA + diphosphate. Functionally, catalyzes the transfer of a dimethylallyl group onto the adenine at position 37 in tRNAs that read codons beginning with uridine, leading to the formation of N6-(dimethylallyl)adenosine (i(6)A). The chain is tRNA dimethylallyltransferase from Bacillus cereus (strain B4264).